A 308-amino-acid chain; its full sequence is Heme A synthase (308 aa).

Residues 1-8 (MFKKRNLK) are Cytoplasmic-facing. Residues 9 to 29 (WLSILATVIMAWVQLGGALVT) form a helical membrane-spanning segment. Residues 30–67 (KTGSENGCGASWPLCHGALLPQNLPIATIIELSHRATS) lie on the Extracellular side of the membrane. Cysteine 37 and cysteine 44 are joined by a disulfide. The active site involves glutamate 60. Histidine 63 serves as a coordination point for heme o. The helical transmembrane segment at 68–88 (ALSLIVVLWLVITAWKNIGYI) threads the bilayer. Topologically, residues 89–93 (KEVKP) are cytoplasmic. Residues 94 to 114 (LCIISVAFLLIQALVGAAAVL) traverse the membrane as a helical segment. Topologically, residues 115 to 123 (WQQNDYVLA) are extracellular. Residues 124–144 (LHFGISLISFSSVFVLTLIIF) form a helical membrane-spanning segment. Position 125 (histidine 125) interacts with heme o. Topologically, residues 145-161 (DVDQKYEANKVHIDRKL) are cytoplasmic. Residues 162-182 (RIYTWTMAICLYVGIYTGALV) traverse the membrane as a helical segment. At 183–215 (RHTKSSLAYGSWPLPFNDLIPHTEQDWVQLAHR) the chain is on the extracellular side. Histidine 214 contacts heme b. A helical membrane pass occupies residues 216 to 236 (TLALIASISVFLAFNYAIKHY). Residues 237 to 244 (QNNRTIRY) are Cytoplasmic-facing. A helical membrane pass occupies residues 245 to 265 (GYTAALLLIILQIVTGALSIF). The Extracellular portion of the chain corresponds to 266–270 (THVNL). The chain crosses the membrane as a helical span at residues 271-291 (IIALLHALIITFEFGLIAYLI). Position 276 (histidine 276) interacts with heme b. Topologically, residues 292–308 (VLLLRSQRVEKVKQNAY) are cytoplasmic.

This sequence belongs to the COX15/CtaA family. Type 1 subfamily. In terms of assembly, interacts with CtaB. The cofactor is heme b.

It localises to the cell membrane. It carries out the reaction Fe(II)-heme o + 2 A + H2O = Fe(II)-heme a + 2 AH2. It functions in the pathway porphyrin-containing compound metabolism; heme A biosynthesis; heme A from heme O: step 1/1. Catalyzes the conversion of heme O to heme A by two successive hydroxylations of the methyl group at C8. The first hydroxylation forms heme I, the second hydroxylation results in an unstable dihydroxymethyl group, which spontaneously dehydrates, resulting in the formyl group of heme A. This Staphylococcus carnosus (strain TM300) protein is Heme A synthase.